The following is a 115-amino-acid chain: Protein SPIRAL1-like 2 (115 aa).

The interval 29–48 (AKAKPAAAAEKETTPAPVKK) is disordered.

It belongs to the SPIRAL1 family.

In terms of biological role, acts in maintaining the cortical microtubules organization essential for anisotropic cell growth. The protein is Protein SPIRAL1-like 2 of Oryza sativa subsp. japonica (Rice).